The primary structure comprises 745 residues: Dipeptidyl aminopeptidase 4 (745 aa).

Positions 1 to 22 (MRLALFALFALMTVATALPAHA) are cleaved as a signal peptide. Positions 208 and 209 each coordinate substrate. Catalysis depends on charge relay system residues serine 613, aspartate 689, and histidine 721.

This sequence belongs to the peptidase S9B family. As to quaternary structure, homodimer.

It is found in the cytoplasm. The protein localises to the periplasm. It carries out the reaction Release of an N-terminal dipeptide, Xaa-Yaa-|-Zaa-, from a polypeptide, preferentially when Yaa is Pro, provided Zaa is neither Pro nor hydroxyproline.. Its activity is regulated as follows. Completely inhibited by the serine protease inhibitor diisopropyl fluorophosphate (DFP) and moderately by N-tosyl-L-phenyl-alanyl chloromethyl ketone (TPCK). Somewhat inhibited by phenylmethanesulfonyl fluoride (PMSF). Activity is not affected by thiol- or metalloprotease inhibitors, such as iodoacetate (IAA), EDTA, N-tosyl-L-lysyl chloromethyl ketone (TLCK), o-phenanthlorine, N-ethylmaleimide (NEM) or dithiothreitol (DTT). Functionally, catalyzes the sequential release of Tyr-Pro, Phe-Pro and Gly-Pro from the N-terminus of peptides and proteins. Is able to cleaves bioactive peptide beta-casomorphin. This is Dipeptidyl aminopeptidase 4 from Pseudoxanthomonas mexicana.